We begin with the raw amino-acid sequence, 499 residues long: Glutamyl-tRNA(Gln) amidotransferase subunit A (499 aa).

Active-site charge relay system residues include Lys-79 and Ser-154. The active-site Acyl-ester intermediate is the Ser-178.

Belongs to the amidase family. GatA subfamily. As to quaternary structure, heterotrimer of A, B and C subunits.

The enzyme catalyses L-glutamyl-tRNA(Gln) + L-glutamine + ATP + H2O = L-glutaminyl-tRNA(Gln) + L-glutamate + ADP + phosphate + H(+). In terms of biological role, allows the formation of correctly charged Gln-tRNA(Gln) through the transamidation of misacylated Glu-tRNA(Gln) in organisms which lack glutaminyl-tRNA synthetase. The reaction takes place in the presence of glutamine and ATP through an activated gamma-phospho-Glu-tRNA(Gln). In Psychrobacter sp. (strain PRwf-1), this protein is Glutamyl-tRNA(Gln) amidotransferase subunit A.